The sequence spans 164 residues: Biotin carboxyl carrier protein of acetyl-CoA carboxylase (164 aa).

One can recognise a Biotinyl-binding domain in the interval 86 to 162; sequence GDFIVSPLVG…QFGSKLFRIV (77 aa). N6-biotinyllysine is present on lysine 128.

Homodimer.

It participates in lipid metabolism; fatty acid biosynthesis. In terms of biological role, this protein is a component of the acetyl coenzyme A carboxylase complex; first, biotin carboxylase catalyzes the carboxylation of the carrier protein and then the transcarboxylase transfers the carboxyl group to form malonyl-CoA. In Chlamydia trachomatis serovar D (strain ATCC VR-885 / DSM 19411 / UW-3/Cx), this protein is Biotin carboxyl carrier protein of acetyl-CoA carboxylase (accB).